The primary structure comprises 350 residues: Small ribosomal subunit biogenesis GTPase RsgA (350 aa).

Positions 1-17 (MSKNKLSKGQQRRVNAN) are enriched in polar residues. Residues 1–33 (MSKNKLSKGQQRRVNANHQRRLKTSKEKPDYDD) are disordered. A CP-type G domain is found at 104 to 273 (TSVLTRPDFY…VIDSPGVREF (170 aa)). GTP contacts are provided by residues 160-163 (NKID) and 214-222 (GQSGVGKSS). Residues C297, C302, H304, and C310 each coordinate Zn(2+).

Belongs to the TRAFAC class YlqF/YawG GTPase family. RsgA subfamily. As to quaternary structure, monomer. Associates with 30S ribosomal subunit, binds 16S rRNA. Zn(2+) is required as a cofactor.

It localises to the cytoplasm. In terms of biological role, one of several proteins that assist in the late maturation steps of the functional core of the 30S ribosomal subunit. Helps release RbfA from mature subunits. May play a role in the assembly of ribosomal proteins into the subunit. Circularly permuted GTPase that catalyzes slow GTP hydrolysis, GTPase activity is stimulated by the 30S ribosomal subunit. This Escherichia fergusonii (strain ATCC 35469 / DSM 13698 / CCUG 18766 / IAM 14443 / JCM 21226 / LMG 7866 / NBRC 102419 / NCTC 12128 / CDC 0568-73) protein is Small ribosomal subunit biogenesis GTPase RsgA.